Reading from the N-terminus, the 423-residue chain is COP9 signalosome complex subunit 3 (423 aa).

One can recognise a PCI domain in the interval 197–365 (NFERALYFYE…GMVCFHDNPE (169 aa)). Residues 402–423 (QFVQKSMGSQEDDSGTKPSSYS) form a disordered region.

The protein belongs to the CSN3 family. As to quaternary structure, component of the CSN complex, probably composed of COPS1, COPS2, COPS3, COPS4, COPS5, COPS6, COPS7, COPS8 and COPS9.

It is found in the cytoplasm. It localises to the nucleus. Functionally, component of the COP9 signalosome complex (CSN), a complex involved in various cellular and developmental processes. The CSN complex is an essential regulator of the ubiquitin (Ubl) conjugation pathway by mediating the deneddylation of the cullin subunits of E3 ligase complexes, leading to modify the Ubl ligase activity. This chain is COP9 signalosome complex subunit 3 (COPS3), found in Gallus gallus (Chicken).